The following is a 136-amino-acid chain: Ribosome-binding factor A (136 aa).

The protein belongs to the RbfA family. Monomer. Binds 30S ribosomal subunits, but not 50S ribosomal subunits or 70S ribosomes.

The protein localises to the cytoplasm. Its function is as follows. One of several proteins that assist in the late maturation steps of the functional core of the 30S ribosomal subunit. Associates with free 30S ribosomal subunits (but not with 30S subunits that are part of 70S ribosomes or polysomes). Required for efficient processing of 16S rRNA. May interact with the 5'-terminal helix region of 16S rRNA. The sequence is that of Ribosome-binding factor A from Yersinia pestis bv. Antiqua (strain Antiqua).